Reading from the N-terminus, the 507-residue chain is Probable aldehyde dehydrogenase (507 aa).

219–225 contributes to the NAD(+) binding site; that stretch reads GFGVEAG. Residues E263 and C302 contribute to the active site.

It belongs to the aldehyde dehydrogenase family.

The catalysed reaction is an aldehyde + NAD(+) + H2O = a carboxylate + NADH + 2 H(+). This is Probable aldehyde dehydrogenase from Streptomyces coelicolor (strain ATCC BAA-471 / A3(2) / M145).